A 303-amino-acid polypeptide reads, in one-letter code: Diaminopimelate epimerase (303 aa).

Asn14 serves as a coordination point for substrate. The span at 60–74 (PVSSAGATADAAAGR) shows a compositional bias: low complexity. The disordered stretch occupies residues 60–86 (PVSSAGATADAAAGRPPQPSAGRPPQP). The segment covering 75-86 (PPQPSAGRPPQP) has biased composition (pro residues). Asn97 serves as a coordination point for substrate. Cys106 serves as the catalytic Proton donor. Substrate is bound by residues 107–108 (GN), Asn178, Asn209, and 227–228 (ER). The active-site Proton acceptor is the Cys236. Residue 237–238 (GS) coordinates substrate.

It belongs to the diaminopimelate epimerase family. Homodimer.

Its subcellular location is the cytoplasm. It carries out the reaction (2S,6S)-2,6-diaminopimelate = meso-2,6-diaminopimelate. It functions in the pathway amino-acid biosynthesis; L-lysine biosynthesis via DAP pathway; DL-2,6-diaminopimelate from LL-2,6-diaminopimelate: step 1/1. In terms of biological role, catalyzes the stereoinversion of LL-2,6-diaminopimelate (L,L-DAP) to meso-diaminopimelate (meso-DAP), a precursor of L-lysine and an essential component of the bacterial peptidoglycan. In Acidothermus cellulolyticus (strain ATCC 43068 / DSM 8971 / 11B), this protein is Diaminopimelate epimerase.